Here is a 1010-residue protein sequence, read N- to C-terminus: Pre-mRNA-splicing factor cwc22 (1010 aa).

Over residues 1–10 the composition is skewed to polar residues; sequence MASADMSPSR. Residues 1-166 form a disordered region; it reads MASADMSPSR…RTPTPPPVAV (166 aa). A compositionally biased stretch (low complexity) spans 18–28; the sequence is RSPSPRTQSPS. Composition is skewed to basic and acidic residues over residues 29–39 and 65–78; these read PRDEDGSRSPG and PRRDRSLSPRDQPH. Over residues 84 to 109 the composition is skewed to low complexity; that stretch reads RSPTPRSQSPSRRSVRSPSPRQGSPA. Residues 142-158 are compositionally biased toward basic and acidic residues; the sequence is RHRDAGGDYRPVRKERT. Residues 222-405 form the MIF4G domain; that stretch reads KKSVNGLVNK…EVLFQVRKDK (184 aa). Residues 466–498 are disordered; sequence GEASDDDEDDDDDDESESGSESEDEEQKALEIK. Acidic residues predominate over residues 468 to 491; it reads ASDDDEDDDDDDESESGSESEDEE. Positions 507–623 constitute an MI domain; sequence NLRRTIYLSI…GWHVFSVIHL (117 aa). The segment at 708-1010 is disordered; that stretch reads LPAPPADSDS…SPVAKRGRVD (303 aa). Residues 718 to 732 are compositionally biased toward low complexity; it reads ESVSSYSSYSSYSSR. The segment covering 753-775 has biased composition (basic residues); the sequence is PPRRGRGRSYSRTPSRSRSRSRS. Positions 776–787 are enriched in low complexity; sequence YSRSVSKSVSRS. Composition is skewed to basic residues over residues 834–846 and 899–910; these read RRGRSGTRSRSRS and RLRRGSYSRSRS. A compositionally biased stretch (low complexity) spans 911 to 935; the sequence is RSPIPIRGNGPAGRDTGRAGPAPAR. A compositionally biased stretch (basic residues) spans 936–948; that stretch reads GGRRNRSYSRSRT. Residues 961 to 973 show a composition bias toward low complexity; sequence SRRVVSRSPSPVV. Positions 976–1010 are enriched in basic residues; the sequence is NKRRRSYSSSRSRSRSSSRSRYRSRSPVAKRGRVD.

The protein belongs to the CWC22 family. As to quaternary structure, associated with the spliceosome.

It is found in the cytoplasm. Its subcellular location is the nucleus. Its function is as follows. Involved in pre-mRNA splicing. The chain is Pre-mRNA-splicing factor cwc22 (msp-1) from Neurospora crassa (strain ATCC 24698 / 74-OR23-1A / CBS 708.71 / DSM 1257 / FGSC 987).